We begin with the raw amino-acid sequence, 577 residues long: Type I restriction enzyme MjaVII methylase subunit (577 aa).

Residues 251 to 256, 281 to 283, E306, and 335 to 336 contribute to the S-adenosyl-L-methionine site; these read EVYTPV, SGT, and DS.

This sequence belongs to the N4/N6-methyltransferase family. The type I restriction/modification system is composed of three polypeptides R, M and S.

It carries out the reaction a 2'-deoxyadenosine in DNA + S-adenosyl-L-methionine = an N(6)-methyl-2'-deoxyadenosine in DNA + S-adenosyl-L-homocysteine + H(+). The subtype gamma methyltransferase (M) subunit of a type I restriction enzyme. The M and S subunits together form a methyltransferase (MTase) that methylates A-3 on the top and bottom strands of the sequence 5'-CAAN(7)TGG-3'. In the presence of the R subunit the complex can also act as an endonuclease, binding to the same target sequence but cutting the DNA some distance from this site. Whether the DNA is cut or modified depends on the methylation state of the target sequence. When the target site is unmodified, the DNA is cut. When the target site is hemimethylated, the complex acts as a maintenance MTase modifying the DNA so that both strands become methylated. After locating a non-methylated recognition site, the enzyme complex serves as a molecular motor that translocates DNA in an ATP-dependent manner until a collision occurs that triggers cleavage. This Methanocaldococcus jannaschii (strain ATCC 43067 / DSM 2661 / JAL-1 / JCM 10045 / NBRC 100440) (Methanococcus jannaschii) protein is Type I restriction enzyme MjaVII methylase subunit.